Reading from the N-terminus, the 308-residue chain is Eukaryotic translation initiation factor 3 subunit G (308 aa).

The segment at 1–23 (MAPVAAPSTSQPAGGKPMNWADE) is disordered. Residues 225–303 (PTLRVTNLSE…LILSCQWSLP (79 aa)) form the RRM domain.

Belongs to the eIF-3 subunit G family. Component of the eukaryotic translation initiation factor 3 (eIF-3) complex.

The protein resides in the cytoplasm. Functionally, RNA-binding component of the eukaryotic translation initiation factor 3 (eIF-3) complex, which is involved in protein synthesis of a specialized repertoire of mRNAs and, together with other initiation factors, stimulates binding of mRNA and methionyl-tRNAi to the 40S ribosome. The eIF-3 complex specifically targets and initiates translation of a subset of mRNAs involved in cell proliferation. This subunit can bind 18S rRNA. In Mycosarcoma maydis (Corn smut fungus), this protein is Eukaryotic translation initiation factor 3 subunit G.